A 156-amino-acid polypeptide reads, in one-letter code: 3-dehydroquinate dehydratase 1 (156 aa).

Residue Tyr32 is the Proton acceptor of the active site. Positions 84, 90, and 97 each coordinate substrate. The active-site Proton donor is His110. Residues Leu111–Ser112 and Arg121 contribute to the substrate site.

This sequence belongs to the type-II 3-dehydroquinase family. In terms of assembly, homododecamer.

The enzyme catalyses 3-dehydroquinate = 3-dehydroshikimate + H2O. The protein operates within metabolic intermediate biosynthesis; chorismate biosynthesis; chorismate from D-erythrose 4-phosphate and phosphoenolpyruvate: step 3/7. Catalyzes a trans-dehydration via an enolate intermediate. The polypeptide is 3-dehydroquinate dehydratase 1 (aroQ1) (Ralstonia nicotianae (strain ATCC BAA-1114 / GMI1000) (Ralstonia solanacearum)).